The sequence spans 147 residues: Phospholipase A2 SSD1043 (147 aa).

The signal sequence occupies residues 1-22 (MSPKFMFFSIIAVWSCAAVTEA). The propeptide occupies 23–28 (LFIQHR). Disulfide bonds link cysteine 55-cysteine 71, cysteine 70-cysteine 130, cysteine 77-cysteine 123, cysteine 86-cysteine 116, and cysteine 109-cysteine 121. Ca(2+)-binding residues include glycine 56 and glycine 58. The active site involves histidine 74. Aspartate 75 provides a ligand contact to Ca(2+). Aspartate 124 is a catalytic residue.

Ca(2+) serves as cofactor. Expressed by the venom gland.

The protein resides in the secreted. It catalyses the reaction a 1,2-diacyl-sn-glycero-3-phosphocholine + H2O = a 1-acyl-sn-glycero-3-phosphocholine + a fatty acid + H(+). Functionally, PLA2 catalyzes the calcium-dependent hydrolysis of the 2-acyl groups in 3-sn-phosphoglycerides. This chain is Phospholipase A2 SSD1043, found in Scolopendra dehaani (Thai centipede).